The primary structure comprises 89 residues: UPF0147 protein STK_04605 (89 aa).

This sequence belongs to the UPF0147 family.

The polypeptide is UPF0147 protein STK_04605 (Sulfurisphaera tokodaii (strain DSM 16993 / JCM 10545 / NBRC 100140 / 7) (Sulfolobus tokodaii)).